The following is a 90-amino-acid chain: Potassium channel toxin BmTXK-beta (90 aa).

The N-terminal stretch at 1–22 (MMKQQFFLFLAVIVMISSVIEA) is a signal peptide. The propeptide occupies 23–29 (GRGKEIM). Positions 55-90 (EYACPVIEKWCEDHCAAKKAIGKCEDTECKCLKLRK) constitute a BetaSPN-type CS-alpha/beta domain. Disulfide bonds link C58–C78, C65–C83, and C69–C85.

This sequence belongs to the long chain scorpion toxin family. Class 2 subfamily. Expressed by the venom gland.

Its subcellular location is the secreted. Its function is as follows. This recombinant peptide reversibly and dose-dependently inhibits the transient outward potassium current (I(To)) of rabbit atrial myocyte and prolongs the action potential duration of rabbit atrial myocyte without affecting the action potential amplitude. Thus, the voltage-gated potassium channels Kv4.1/KCND1, Kv4.2/KCND2, Kv4.3/KCND3 may be the target of this toxin. In Olivierus martensii (Manchurian scorpion), this protein is Potassium channel toxin BmTXK-beta.